A 213-amino-acid polypeptide reads, in one-letter code: ATP phosphoribosyltransferase (213 aa).

The protein belongs to the ATP phosphoribosyltransferase family. Short subfamily. In terms of assembly, heteromultimer composed of HisG and HisZ subunits.

The protein localises to the cytoplasm. It carries out the reaction 1-(5-phospho-beta-D-ribosyl)-ATP + diphosphate = 5-phospho-alpha-D-ribose 1-diphosphate + ATP. The protein operates within amino-acid biosynthesis; L-histidine biosynthesis; L-histidine from 5-phospho-alpha-D-ribose 1-diphosphate: step 1/9. Functionally, catalyzes the condensation of ATP and 5-phosphoribose 1-diphosphate to form N'-(5'-phosphoribosyl)-ATP (PR-ATP). Has a crucial role in the pathway because the rate of histidine biosynthesis seems to be controlled primarily by regulation of HisG enzymatic activity. This Bacillus velezensis (strain DSM 23117 / BGSC 10A6 / LMG 26770 / FZB42) (Bacillus amyloliquefaciens subsp. plantarum) protein is ATP phosphoribosyltransferase.